The sequence spans 702 residues: Soluble guanylate cyclase gcy-31 (702 aa).

H104 serves as a coordination point for heme. The stretch at 368-406 (TQQSAELKLLLHQEAQKSRNMRENMNRLKKERRRTDKLL) forms a coiled coil. Residues 435–564 (TILFTDIVEF…ETVYVANKME (130 aa)) form the Guanylate cyclase domain. Mg(2+)-binding residues include D440 and D484. Residues 614-702 (RHGPHRVPSP…QDLTPRKSIT (89 aa)) form a disordered region. The segment covering 633–643 (SQTEDDDDDEL) has biased composition (acidic residues). A compositionally biased stretch (polar residues) spans 683-695 (RNSNKTPRQSQDL).

Belongs to the adenylyl cyclase class-4/guanylyl cyclase family. In terms of assembly, heterodimer; with other soluble guanylate cyclases. Requires heme as cofactor. In terms of tissue distribution, expressed in a pair of bilaterally symmetric neurons in the head.

It localises to the cytoplasm. The enzyme catalyses GTP = 3',5'-cyclic GMP + diphosphate. Its activity is regulated as follows. May be regulated by molecular oxygen. Probably not activated by nitric oxide (NO). Its function is as follows. Synthesizes cyclic GMP (cGMP) from GTP. May play a role in embryogenesis. The chain is Soluble guanylate cyclase gcy-31 (gcy-31) from Caenorhabditis elegans.